The sequence spans 114 residues: T cell receptor beta variable 3-1 (114 aa).

The signal sequence occupies residues 1–21; it reads MGCRLLCCVVFCLLQAGPLDT. The Ig-like domain maps to 22–114; that stretch reads AVSQTPKYLV…SAVYFCASSQ (93 aa). Cysteine 42 and cysteine 110 form a disulfide bridge. Asparagine 76 carries N-linked (GlcNAc...) asparagine glycosylation.

In terms of assembly, alpha-beta TR is a heterodimer composed of an alpha and beta chain; disulfide-linked. The alpha-beta TR is associated with the transmembrane signaling CD3 coreceptor proteins to form the TR-CD3 (TcR or TCR). The assembly of alpha-beta TR heterodimers with CD3 occurs in the endoplasmic reticulum where a single alpha-beta TR heterodimer associates with one CD3D-CD3E heterodimer, one CD3G-CD3E heterodimer and one CD247 homodimer forming a stable octameric structure. CD3D-CD3E and CD3G-CD3E heterodimers preferentially associate with TR alpha and TR beta chains, respectively. The association of the CD247 homodimer is the last step of TcR assembly in the endoplasmic reticulum and is required for transport to the cell surface.

It localises to the cell membrane. V region of the variable domain of T cell receptor (TR) beta chain that participates in the antigen recognition. Alpha-beta T cell receptors are antigen specific receptors which are essential to the immune response and are present on the cell surface of T lymphocytes. Recognize peptide-major histocompatibility (MH) (pMH) complexes that are displayed by antigen presenting cells (APC), a prerequisite for efficient T cell adaptive immunity against pathogens. Binding of alpha-beta TR to pMH complex initiates TR-CD3 clustering on the cell surface and intracellular activation of LCK that phosphorylates the ITAM motifs of CD3G, CD3D, CD3E and CD247 enabling the recruitment of ZAP70. In turn ZAP70 phosphorylates LAT, which recruits numerous signaling molecules to form the LAT signalosome. The LAT signalosome propagates signal branching to three major signaling pathways, the calcium, the mitogen-activated protein kinase (MAPK) kinase and the nuclear factor NF-kappa-B (NF-kB) pathways, leading to the mobilization of transcription factors that are critical for gene expression and essential for T cell growth and differentiation. The T cell repertoire is generated in the thymus, by V-(D)-J rearrangement. This repertoire is then shaped by intrathymic selection events to generate a peripheral T cell pool of self-MH restricted, non-autoaggressive T cells. Post-thymic interaction of alpha-beta TR with the pMH complexes shapes TR structural and functional avidity. The chain is T cell receptor beta variable 3-1 from Homo sapiens (Human).